Here is a 101-residue protein sequence, read N- to C-terminus: Thyrotropin subunit beta (101 aa).

Disulfide bonds link Cys2/Cys88, Cys10/Cys66, Cys14/Cys68, and Cys71/Cys78. An N-linked (GlcNAc...) asparagine glycan is attached at Asn6.

Belongs to the glycoprotein hormones subunit beta family. As to quaternary structure, heterodimer of a common alpha chain and a unique beta chain which confers biological specificity to thyrotropin, lutropin, follitropin and gonadotropin.

The protein localises to the secreted. In terms of biological role, indispensable for the control of thyroid structure and metabolism. The polypeptide is Thyrotropin subunit beta (TSHB) (Phodopus sungorus (Striped hairy-footed hamster)).